The following is a 149-amino-acid chain: Arginine repressor (149 aa).

The protein belongs to the ArgR family.

The protein resides in the cytoplasm. Its pathway is amino-acid biosynthesis; L-arginine biosynthesis [regulation]. In terms of biological role, regulates arginine biosynthesis genes. The sequence is that of Arginine repressor from Oceanobacillus iheyensis (strain DSM 14371 / CIP 107618 / JCM 11309 / KCTC 3954 / HTE831).